A 72-amino-acid chain; its full sequence is Translation initiation factor IF-1 (72 aa).

The S1-like domain occupies 1-72 (MAKDDVIEVD…DKGRITFRYK (72 aa)).

The protein belongs to the IF-1 family. Component of the 30S ribosomal translation pre-initiation complex which assembles on the 30S ribosome in the order IF-2 and IF-3, IF-1 and N-formylmethionyl-tRNA(fMet); mRNA recruitment can occur at any time during PIC assembly.

Its subcellular location is the cytoplasm. Its function is as follows. One of the essential components for the initiation of protein synthesis. Stabilizes the binding of IF-2 and IF-3 on the 30S subunit to which N-formylmethionyl-tRNA(fMet) subsequently binds. Helps modulate mRNA selection, yielding the 30S pre-initiation complex (PIC). Upon addition of the 50S ribosomal subunit IF-1, IF-2 and IF-3 are released leaving the mature 70S translation initiation complex. The chain is Translation initiation factor IF-1 from Nitratiruptor sp. (strain SB155-2).